The chain runs to 102 residues: Large ribosomal subunit protein mL63 (102 aa).

The protein belongs to the mitochondrion-specific ribosomal protein mL63 family.

Its subcellular location is the mitochondrion. This is Large ribosomal subunit protein mL63 (MRPL57) from Bos taurus (Bovine).